Here is a 303-residue protein sequence, read N- to C-terminus: Ribosomal protein L11 methyltransferase (303 aa).

S-adenosyl-L-methionine contacts are provided by threonine 144, glycine 165, aspartate 187, and asparagine 235.

This sequence belongs to the methyltransferase superfamily. PrmA family.

It is found in the cytoplasm. It carries out the reaction L-lysyl-[protein] + 3 S-adenosyl-L-methionine = N(6),N(6),N(6)-trimethyl-L-lysyl-[protein] + 3 S-adenosyl-L-homocysteine + 3 H(+). Functionally, methylates ribosomal protein L11. The chain is Ribosomal protein L11 methyltransferase from Prochlorococcus marinus (strain AS9601).